Here is a 503-residue protein sequence, read N- to C-terminus: ATP synthase subunit alpha (503 aa).

Position 169–176 (Gly-169–Thr-176) interacts with ATP.

Belongs to the ATPase alpha/beta chains family. F-type ATPases have 2 components, CF(1) - the catalytic core - and CF(0) - the membrane proton channel. CF(1) has five subunits: alpha(3), beta(3), gamma(1), delta(1), epsilon(1). CF(0) has three main subunits: a(1), b(2) and c(9-12). The alpha and beta chains form an alternating ring which encloses part of the gamma chain. CF(1) is attached to CF(0) by a central stalk formed by the gamma and epsilon chains, while a peripheral stalk is formed by the delta and b chains.

It localises to the cell membrane. The enzyme catalyses ATP + H2O + 4 H(+)(in) = ADP + phosphate + 5 H(+)(out). Functionally, produces ATP from ADP in the presence of a proton gradient across the membrane. The alpha chain is a regulatory subunit. The chain is ATP synthase subunit alpha from Lactobacillus johnsonii (strain CNCM I-12250 / La1 / NCC 533).